The chain runs to 676 residues: Pentatricopeptide repeat-containing protein ATP4 homolog, chloroplastic (676 aa).

The N-terminal 73 residues, M1–R73, are a transit peptide targeting the chloroplast. The disordered stretch occupies residues L17–Y58. PPR repeat units follow at residues E148 to P182, D183 to P217, D218 to L252, D253 to P287, N288 to P322, N323 to E353, D358 to S388, D396 to P430, N431 to P465, and R532 to S566. A Smr domain is found at L578–R662.

This sequence belongs to the PPR family. P subfamily.

It is found in the plastid. The protein resides in the chloroplast. Its function is as follows. Involved in translation and accumulation of chloroplast ATP synthase subunits. This Oryza sativa subsp. japonica (Rice) protein is Pentatricopeptide repeat-containing protein ATP4 homolog, chloroplastic.